The chain runs to 305 residues: tRNA uridine(34) hydroxylase (305 aa).

One can recognise a Rhodanese domain in the interval 125–219 (ADENTVVVDT…YLEEVPREQS (95 aa)). The Cysteine persulfide intermediate role is filled by cysteine 179.

Belongs to the TrhO family.

It catalyses the reaction uridine(34) in tRNA + AH2 + O2 = 5-hydroxyuridine(34) in tRNA + A + H2O. Its function is as follows. Catalyzes oxygen-dependent 5-hydroxyuridine (ho5U) modification at position 34 in tRNAs. This chain is tRNA uridine(34) hydroxylase, found in Brucella canis (strain ATCC 23365 / NCTC 10854 / RM-666).